Reading from the N-terminus, the 219-residue chain is ATP phosphoribosyltransferase (219 aa).

The protein belongs to the ATP phosphoribosyltransferase family. Short subfamily. Heteromultimer composed of HisG and HisZ subunits.

The protein resides in the cytoplasm. The catalysed reaction is 1-(5-phospho-beta-D-ribosyl)-ATP + diphosphate = 5-phospho-alpha-D-ribose 1-diphosphate + ATP. It functions in the pathway amino-acid biosynthesis; L-histidine biosynthesis; L-histidine from 5-phospho-alpha-D-ribose 1-diphosphate: step 1/9. Catalyzes the condensation of ATP and 5-phosphoribose 1-diphosphate to form N'-(5'-phosphoribosyl)-ATP (PR-ATP). Has a crucial role in the pathway because the rate of histidine biosynthesis seems to be controlled primarily by regulation of HisG enzymatic activity. This is ATP phosphoribosyltransferase from Clostridium kluyveri (strain NBRC 12016).